The primary structure comprises 325 residues: MAEYKDNLLGEANSFLEVLEQVSHLAPLDKPVLIIGERGTGKELIASRLHYLSSRWQGPFISLNCAALNENLLDSELFGHEAGAFTGAQKRHPGRFERADGGTLFLDELATAPMMVQEKLLRVIEYGELERVGGSQPLQVNVRLVCATNADLPAMVNEGTFRADLLDRLAFDVVQLPPLRERESDIMLMAEYFAIQMCREIKLPLFPGFTERARETLLNYRWPGNIRELKNVVERSVYRHGTSDYPLDDIIIDPFKRRPPEDAIAVSETTSLPTLPLDLREFQMQQEKELLQLSLQQGKYNQKRAAELLGLTYHQFRALLKKHQI.

The Sigma-54 factor interaction domain occupies 15–237 (FLEVLEQVSH…ELKNVVERSV (223 aa)). Residues 36-43 (GERGTGKE) and 99-108 (ADGGTLFLDE) contribute to the ATP site. The H-T-H motif DNA-binding region spans 302 to 321 (QKRAAELLGLTYHQFRALLK).

In terms of assembly, forms a complex with PspA, which is composed of around 6 PspF subunits and 6 PspA subunits.

It is found in the cytoplasm. Its activity is regulated as follows. ATPase activity is inhibited by interaction with PspA. Under inducing conditions, the interaction is disrupted, allowing activation of psp transcription. Transcriptional activator for the phage shock protein (psp) operon (pspABCDE) and pspG gene. The chain is Psp operon transcriptional activator (pspF) from Escherichia coli (strain K12).